Reading from the N-terminus, the 318-residue chain is Acetaldehyde dehydrogenase 1 (318 aa).

15–18 (SGNI) contacts NAD(+). Cysteine 133 (acyl-thioester intermediate) is an active-site residue. Residues 164 to 172 (SAGPGTRAN) and asparagine 289 each bind NAD(+).

It belongs to the acetaldehyde dehydrogenase family.

The enzyme catalyses acetaldehyde + NAD(+) + CoA = acetyl-CoA + NADH + H(+). In Azotobacter vinelandii (strain DJ / ATCC BAA-1303), this protein is Acetaldehyde dehydrogenase 1 (xylQ).